The chain runs to 512 residues: Cytochrome P450 monooxygenase pbrB (512 aa).

The helical transmembrane segment at 6–29 threads the bilayer; that stretch reads LSFPAAVGAAFGAFAIYVVARCIY. Cys452 contacts heme.

Belongs to the cytochrome P450 family. Heme is required as a cofactor.

It is found in the membrane. It participates in secondary metabolite biosynthesis; terpenoid biosynthesis. Its function is as follows. Cytochrome P450 monooxygenase; part of the gene cluster that mediates the biosynthesis of the sesquiterpenoid aspterric acid (AA), an inhibitor of dihydroxy-acid dehydratase (DHAD) effective as an herbicide. PbrB catalyzes the second step within the pathway and converts (-)-daucane produced by the terpene cyclase pbrA into an alpha-epoxy carboxylate intermediate which is further converted into the tricyclic aspterric acid by the cytochrome P450 monooxygenase pbrC. In Penicillium brasilianum, this protein is Cytochrome P450 monooxygenase pbrB.